The following is a 785-amino-acid chain: Putative endonuclease MutS2 (785 aa).

335 to 342 serves as a coordination point for ATP; that stretch reads GPNTGGKT. Positions 513-586 form a coiled coil; it reads TAEHNEVDTM…AEKVKAAMKE (74 aa). A partially complements a deletion for mitomycin C (MMC) resistance and for chromosomal DNA transformation region spans residues 636–785; it reads KRDFKPGDEV…GSGVTVVELK (150 aa). The segment at 641–681 is KOW region; sequence PGDEVKVLTFGQKGTLLEKTGGNEWNVQIGILKMKVKEKDL. Residues 710-785 enclose the Smr domain; that stretch reads LDLRGERYEN…GSGVTVVELK (76 aa).

It belongs to the DNA mismatch repair MutS family. MutS2 subfamily. Binds to ribosomes as a homodimer. Binds to stalled/collided disomes, association is greater in (ribosome-targeted) antibiotic-treated cells (with increased stalling at specific mRNA sites). The clamp domain of one monomer binds the A-site finger, the 23S rRNA of the central protuberance and ribosomal protein uL5 of the leading (stalled) ribosome, while the other monomer binds in a gap between the ribosomal central protuberance and the L1 stalk of the leading ribosome.

It is found in the cytoplasm. Functionally, acts as a ribosome collision sensor splitting the ribosome into its 2 subunits. Detects stalled/collided disomes (pairs of ribosomes where the leading ribosome is stalled and a second ribosome has collided with it) which it binds and splits, by an ATP-hydrolysis driven conformational change. Does not seem to have endoribonuclease activity (in the context of ribosome stalling). Acts upstream of the ribosome quality control system (RQC), a ribosome-associated complex that mediates the extraction of incompletely synthesized nascent chains from stalled ribosomes and their subsequent degradation, probably generates substrates for RQC. Does not seem to be involved in mismatch repair or in the prevention of interspecific recombination during DNA transformation. Might be involved in homologous recombination. Putative endonuclease that may be involved in the suppression of homologous recombination and may therefore have a key role in the control of bacterial genetic diversity. This Bacillus subtilis (strain 168) protein is Putative endonuclease MutS2.